Here is a 531-residue protein sequence, read N- to C-terminus: Protein MGF 505-1R (531 aa).

It belongs to the asfivirus MGF 505 family.

Its function is as follows. Plays a role in virus cell tropism, and may be required for efficient virus replication in macrophages. In Ornithodoros (relapsing fever ticks), this protein is Protein MGF 505-1R.